Here is a 171-residue protein sequence, read N- to C-terminus: uncharacterized protein (171 aa).

Disordered stretches follow at residues 27–53 (DCPG…KMVL) and 82–108 (GHLE…PSSS). Positions 32-50 (GNNNREPSISTRGRTSSSK) are enriched in polar residues.

This is an uncharacterized protein from Homo sapiens (Human).